The chain runs to 302 residues: 33 kDa chaperonin (302 aa).

2 disulfides stabilise this stretch: Cys247-Cys249 and Cys280-Cys283.

The protein belongs to the HSP33 family. Under oxidizing conditions two disulfide bonds are formed involving the reactive cysteines. Under reducing conditions zinc is bound to the reactive cysteines and the protein is inactive.

It is found in the cytoplasm. Its function is as follows. Redox regulated molecular chaperone. Protects both thermally unfolding and oxidatively damaged proteins from irreversible aggregation. Plays an important role in the bacterial defense system toward oxidative stress. The protein is 33 kDa chaperonin of Prochlorococcus marinus (strain MIT 9301).